A 633-amino-acid chain; its full sequence is Beta-myrcene synthase TPS15CT (633 aa).

The N-terminal 55 residues, 1 to 55 (MHCMAVHQFSPSIVSSLPTISTYNNNHFCRFFTPKTSISPISKTKSKSSTCYPIQ), are a transit peptide targeting the chloroplast. The (2E)-geranyl diphosphate site is built by R344, D381, D385, R525, and D528. D381 and D385 together coordinate Mg(2+). Positions 381 to 385 (DDIYD) match the DDXXD motif motif. Mg(2+)-binding residues include D528, T532, and E536.

This sequence belongs to the terpene synthase family. Tpsb subfamily. The cofactor is Mg(2+). It depends on Mn(2+) as a cofactor.

It is found in the plastid. It localises to the chloroplast. The enzyme catalyses (2E)-geranyl diphosphate = beta-myrcene + diphosphate. It functions in the pathway secondary metabolite biosynthesis; terpenoid biosynthesis. Functionally, involved in monoterpene (C10) olefins biosynthesis, constituants of cannabinoids and terpenoids-rich resins. Catalyzes strictly the conversion of (2E)-geranyl diphosphate to beta-myrcene. This chain is Beta-myrcene synthase TPS15CT, found in Cannabis sativa (Hemp).